A 137-amino-acid chain; its full sequence is uncharacterized protein (137 aa).

The helical transmembrane segment at 4-21 (ISWQIVLAVIGVVAGFII) threads the bilayer.

The protein localises to the membrane. This is an uncharacterized protein from Archaeoglobus fulgidus (strain ATCC 49558 / DSM 4304 / JCM 9628 / NBRC 100126 / VC-16).